The following is a 425-amino-acid chain: UPF0229 protein YE2273 (425 aa).

Residues 84–110 (TNDRIERPQGGGGGSGSGQGNAGQDGE) are disordered. Residues 92-108 (QGGGGGSGSGQGNAGQD) show a composition bias toward gly residues.

This sequence belongs to the UPF0229 family.

The chain is UPF0229 protein YE2273 from Yersinia enterocolitica serotype O:8 / biotype 1B (strain NCTC 13174 / 8081).